A 101-amino-acid polypeptide reads, in one-letter code: uncharacterized protein (101 aa).

Residues 68 to 90 form a helical membrane-spanning segment; that stretch reads LAFAFCGRANTFISCFISFASLI.

It localises to the membrane. This is an uncharacterized protein from Saccharomyces cerevisiae (strain ATCC 204508 / S288c) (Baker's yeast).